The primary structure comprises 838 residues: Glycogen phosphorylase, brain form (838 aa).

Ala-2 is subject to N-acetylalanine. A Phosphoserine modification is found at Ser-15. AMP-binding residues include Asp-43, Tyr-197, and Arg-310. Residue Tyr-197 is modified to Phosphotyrosine. Position 473 is a phosphotyrosine (Tyr-473). Position 524 is a phosphoserine (Ser-524). Residue Lys-569 coordinates pyridoxal 5'-phosphate. Residues 677 to 678 (TG) form a pyridoxal 5'-phosphate region. Lys-681 is subject to N6-(pyridoxal phosphate)lysine.

The protein belongs to the glycogen phosphorylase family. As to quaternary structure, homodimer. Dimers associate into a tetramer to form the enzymatically active phosphorylase A. It depends on pyridoxal 5'-phosphate as a cofactor. In terms of processing, phosphorylation of Ser-15 converts phosphorylase B (unphosphorylated) to phosphorylase A.

It catalyses the reaction [(1-&gt;4)-alpha-D-glucosyl](n) + phosphate = [(1-&gt;4)-alpha-D-glucosyl](n-1) + alpha-D-glucose 1-phosphate. With respect to regulation, activity of phosphorylase is controlled both by allosteric means (through the non-covalent binding of metabolites) and by covalent modification. Thus AMP allosterically activates, whereas ATP, ADP, and glucose-6-phosphate allosterically inhibit, phosphorylase B. Glycogen phosphorylase that regulates glycogen mobilization. Phosphorylase is an important allosteric enzyme in carbohydrate metabolism. Enzymes from different sources differ in their regulatory mechanisms and in their natural substrates. However, all known phosphorylases share catalytic and structural properties. This is Glycogen phosphorylase, brain form (Pygb) from Rattus norvegicus (Rat).